A 177-amino-acid polypeptide reads, in one-letter code: Peptide methionine sulfoxide reductase MsrA (177 aa).

The active site involves Cys-12.

It belongs to the MsrA Met sulfoxide reductase family.

The catalysed reaction is L-methionyl-[protein] + [thioredoxin]-disulfide + H2O = L-methionyl-(S)-S-oxide-[protein] + [thioredoxin]-dithiol. The enzyme catalyses [thioredoxin]-disulfide + L-methionine + H2O = L-methionine (S)-S-oxide + [thioredoxin]-dithiol. In terms of biological role, has an important function as a repair enzyme for proteins that have been inactivated by oxidation. Catalyzes the reversible oxidation-reduction of methionine sulfoxide in proteins to methionine. In Halobacterium salinarum (strain ATCC 29341 / DSM 671 / R1), this protein is Peptide methionine sulfoxide reductase MsrA.